Reading from the N-terminus, the 540-residue chain is MLAEWGACLLLAVALLGPGLQAQAMEGVKCGGVLSAPSGNFSSPNFPRLYPYNTECSWLIVVAEGSSVLLTFHAFDLEYHDTCSFDFLEIYNGASPDKGNLLGRFCGKVPPPPFTSSWHVMSVIFHSDKHVASHGFSAGYQKDVCGGVLTGLSGVLTSPEYPNNYPNSMECHWVIRAAGPAHVKLVFVDFQVEGNEECTYDYVAVLGGPGPTRGHHYCGSTRPPTLVSLGHELQVVFKSDFNIGGRGFKAYYFSGECQEVYMAMRGNFSSPQYPSSYPNNIRCHWTIRLPPGYQVKVFFLDLDLEEPNSLTKTCDFDHLAAFDGASEEAPLLGNWCGHHLPPPVTSSHNQLLLLLHTDRSTTRRGFSVAYIGVVPMNVSCSRTDFQILISTQALAPLERTKVYLGSRSCAAQEVGGNLRIQARFDTCGTESQRRNNTSVIVSVLYIDFSAAGREDIHEYEVRCEPRRKEASVHLLSGSHWLGPYAATAEHLQEAPPMDEAEALEGPVSMVAQDTSDIVFLGLCILAGILMVIAIVVLMLL.

A signal peptide spans 1-22 (MLAEWGACLLLAVALLGPGLQA). Over 23–516 (QAMEGVKCGG…VSMVAQDTSD (494 aa)) the chain is Extracellular. Intrachain disulfides connect cysteine 30–cysteine 56, cysteine 83–cysteine 106, cysteine 145–cysteine 171, cysteine 198–cysteine 218, cysteine 257–cysteine 283, and cysteine 314–cysteine 336. CUB domains lie at 30-143 (CGGV…YQKD), 145-255 (CGGV…YFSG), and 257-373 (CQEV…YIGV). Asparagine 40 carries N-linked (GlcNAc...) asparagine glycosylation. A glycan (N-linked (GlcNAc...) asparagine) is linked at asparagine 267. Residues asparagine 377, asparagine 435, and asparagine 436 are each glycosylated (N-linked (GlcNAc...) asparagine). The helical transmembrane segment at 517-537 (IVFLGLCILAGILMVIAIVVL) threads the bilayer. Over 538–540 (MLL) the chain is Cytoplasmic.

It localises to the membrane. The protein is CUB domain-containing protein 2 (CDCP2) of Homo sapiens (Human).